The primary structure comprises 502 residues: ATP synthase subunit alpha (502 aa).

169–176 (GDRQTGKT) contacts ATP.

It belongs to the ATPase alpha/beta chains family. In terms of assembly, F-type ATPases have 2 components, CF(1) - the catalytic core - and CF(0) - the membrane proton channel. CF(1) has five subunits: alpha(3), beta(3), gamma(1), delta(1), epsilon(1). CF(0) has three main subunits: a(1), b(2) and c(9-12). The alpha and beta chains form an alternating ring which encloses part of the gamma chain. CF(1) is attached to CF(0) by a central stalk formed by the gamma and epsilon chains, while a peripheral stalk is formed by the delta and b chains.

The protein resides in the cell inner membrane. It catalyses the reaction ATP + H2O + 4 H(+)(in) = ADP + phosphate + 5 H(+)(out). Its function is as follows. Produces ATP from ADP in the presence of a proton gradient across the membrane. The alpha chain is a regulatory subunit. This is ATP synthase subunit alpha from Geotalea uraniireducens (strain Rf4) (Geobacter uraniireducens).